Consider the following 149-residue polypeptide: Prefoldin subunit alpha (149 aa).

The protein belongs to the prefoldin alpha subunit family. As to quaternary structure, heterohexamer of two alpha and four beta subunits.

Its subcellular location is the cytoplasm. Molecular chaperone capable of stabilizing a range of proteins. Seems to fulfill an ATP-independent, HSP70-like function in archaeal de novo protein folding. The protein is Prefoldin subunit alpha of Methanoculleus marisnigri (strain ATCC 35101 / DSM 1498 / JR1).